The sequence spans 168 residues: Mesencephalic astrocyte-derived neurotrophic factor homolog (168 aa).

The first 17 residues, 1–17 (MSRLVLLISLVIVVASA), serve as a signal peptide directing secretion. 4 disulfides stabilise this stretch: C22/C109, C25/C97, C55/C66, and C143/C146.

This sequence belongs to the ARMET family. As to expression, expressed in the intestine, spermatheca and nervous system. Expressed in the hypoderm. Expressed in structures of the excretory system. Not expressed in the male gonad.

It is found in the secreted. The protein localises to the endoplasmic reticulum lumen. Functionally, inhibits endoplasmic reticulum (ER) stress response. Retained in the ER under normal conditions and is up-regulated and secreted by the ER in response to ER stress and hypoxia. Following secretion by the ER, directly binds to 3-O-sulfogalactosylceramide, a lipid sulfatide in the outer cell membrane of target cells. Sulfatide binding promotes its cellular uptake by endocytosis, and is required for its role in alleviating ER stress under ER stress conditions. Has a neuroprotective role, ensuring survival of dopaminergic neurons during normal growth. This chain is Mesencephalic astrocyte-derived neurotrophic factor homolog, found in Caenorhabditis elegans.